We begin with the raw amino-acid sequence, 327 residues long: GMP reductase (327 aa).

Catalysis depends on C175, which acts as the Thioimidate intermediate. 204–227 (IIADGGIRTHGDVAKSIRFGATMV) serves as a coordination point for NADP(+).

The protein belongs to the IMPDH/GMPR family. GuaC type 2 subfamily.

It catalyses the reaction IMP + NH4(+) + NADP(+) = GMP + NADPH + 2 H(+). Its function is as follows. Catalyzes the irreversible NADPH-dependent deamination of GMP to IMP. It functions in the conversion of nucleobase, nucleoside and nucleotide derivatives of G to A nucleotides, and in maintaining the intracellular balance of A and G nucleotides. The sequence is that of GMP reductase from Bacillus thuringiensis subsp. konkukian (strain 97-27).